Reading from the N-terminus, the 566-residue chain is Urease subunit alpha (566 aa).

In terms of domain architecture, Urease spans 128–566 (GGIDTHIHWI…LPMAQRYFLF (439 aa)). Ni(2+) is bound by residues His-133, His-135, and Lys-216. Lys-216 carries the N6-carboxylysine modification. His-218 is a binding site for substrate. His-245 and His-271 together coordinate Ni(2+). His-319 acts as the Proton donor in catalysis. Asp-359 contacts Ni(2+).

It belongs to the metallo-dependent hydrolases superfamily. Urease alpha subunit family. In terms of assembly, heterotrimer of UreA (gamma), UreB (beta) and UreC (alpha) subunits. Three heterotrimers associate to form the active enzyme. Requires Ni cation as cofactor. Post-translationally, carboxylation allows a single lysine to coordinate two nickel ions.

Its subcellular location is the cytoplasm. It catalyses the reaction urea + 2 H2O + H(+) = hydrogencarbonate + 2 NH4(+). It functions in the pathway nitrogen metabolism; urea degradation; CO(2) and NH(3) from urea (urease route): step 1/1. This chain is Urease subunit alpha, found in Acinetobacter baylyi (strain ATCC 33305 / BD413 / ADP1).